We begin with the raw amino-acid sequence, 1138 residues long: Envelopment polyprotein (1138 aa).

The signal sequence occupies residues 1–18; sequence MEGWYLVVLGVCYTLTLA. At 19 to 487 the chain is on the lumenal side; sequence MPKTIYELKM…CVPGLHGWAT (469 aa). 11 disulfide bridges follow: Cys-30-Cys-155, Cys-64-Cys-161, Cys-113-Cys-132, Cys-137-Cys-142, Cys-179-Cys-189, Cys-214-Cys-250, Cys-239-Cys-354, Cys-379-Cys-438, Cys-383-Cys-392, Cys-408-Cys-427, and Cys-455-Cys-478. N-linked (GlcNAc...) asparagine; by host glycosylation is present at Asn-138. A glycan (N-linked (GlcNAc...) asparagine; by host) is linked at Asn-350. An N-linked (GlcNAc...) asparagine; by host glycan is attached at Asn-402. A helical transmembrane segment spans residues 488-508; that stretch reads VMLLSTFCFGWVLIPAVTLII. The Cytoplasmic segment spans residues 509–630; that stretch reads LKCLRVLTFS…LGVFRYKSRC (122 aa). Positions 519-536 are binding to the ribonucleoprotein; it reads CSHYTNESKFKFILEKVK. 2 consecutive CCHC-type zinc fingers follow at residues 548-568 and 573-594; these read CDVC…RQSC and CPYC…YSIC. 3 binding to the ribonucleoprotein regions span residues 591–608, 595–606, and 614–628; these read YSIC…KKSL, KLTGRFQEALKK, and KKGC…RYKS. The segment at 610–637 is interaction with host TRAF3; it reads KPEVKKGCYRTLGVFRYKSRCYVGLVWC. Residues 614–637 enclose the ITAM domain; the sequence is KKGCYRTLGVFRYKSRCYVGLVWC. 2 positions are modified to phosphotyrosine: Tyr-618 and Tyr-631. The short motif at 618–621 is the YxxL element; it reads YRTL. Residues 631–651 traverse the membrane as a helical segment; it reads YVGLVWCLLLTCEIVIWAASA. Over 652–1107 the chain is Lumenal; the sequence is ETPLMESGWS…EWLLGILNGN (456 aa). 8 disulfide bridges follow: Cys-738–Cys-773, Cys-742–Cys-780, Cys-754–Cys-887, Cys-768–Cys-898, Cys-783–Cys-906, Cys-809–Cys-818, Cys-826–Cys-835, and Cys-866–Cys-870. The interval 760 to 780 is fusion loop; the sequence is YQYETGWGCNPGDCPGVGTGC. Asn-930 is a glycosylation site (N-linked (GlcNAc...) asparagine; by host). Cystine bridges form between Cys-972–Cys-1002, Cys-995–Cys-1047, Cys-1012–Cys-1017, Cys-1048–Cys-1053, and Cys-1087–Cys-1091. A helical membrane pass occupies residues 1108–1128; that stretch reads WIVVVVLVVILILSIIMFSVL. The segment at 1124–1138 is binding to the ribonucleoprotein; sequence MFSVLCPRRGHKKTV. Residues 1129-1138 lie on the Cytoplasmic side of the membrane; it reads CPRRGHKKTV.

Belongs to the hantavirus envelope glycoprotein family. As to quaternary structure, homodimer. Homotetramer; forms heterotetrameric Gn-Gc spikes in the pre-fusion conformation. Interacts (via C-terminus) with the nucleoprotein. Interacts with host TUFM; this interaction contributes to the virus-induced degradation of mitochondria by autophagy, which leads to degradation of host MAVS and inhibition of type I interferon (IFN) responses. Interacts with host MAP1LC3B; this interaction contributes to the virus-induced degradation of mitochondria by autophagy, which leads to degradation of host MAVS and inhibition of type I interferon (IFN) responses. Interacts (via C-terminus) with host TRAF3; this interaction inhibits the formation of TRAF3-TBK1 complexes. Homodimer. Homotetramer; forms heterotetrameric Gn-Gc spikes in the pre-fusion conformation. Homotrimer; forms homotrimer in the post-fusion conformation at acidic pH. Interacts (via C-terminus) with the nucleoprotein. Post-translationally, envelope polyprotein precursor is quickly cleaved in vivo just after synthesis, presumably by host signal peptidase.

It is found in the virion membrane. The protein localises to the host cell surface. Its subcellular location is the host Golgi apparatus membrane. It localises to the host endoplasmic reticulum membrane. The protein resides in the host mitochondrion. Forms homotetramers with glycoprotein C at the surface of the virion. Attaches the virion to host cell receptors including integrin ITGAV/ITGB3. This attachment induces virion internalization possibly through clathrin-dependent endocytosis and dynamin-independent macropinocytosis. Mediates the assembly and budding of infectious virus particles through its interaction with the nucleocapsid protein and the viral genome. May dysregulate normal immune and endothelial cell responses through an ITAM motif. Translocates to mitochondria, binds to host TUFM and recruits MAP1LC3B. These interactions induce mitochondrial autophagy and therefore destruction of host MAVS leading to inhibition of type I interferon (IFN) responses. Concomitant breakdown of glycoprotein N is apparently prevented by the nucleoprotein that may inhibit Gn-stimulated autophagosome-lysosome fusion. Interacts with the viral genomic RNA. Inhibits the host RIG-I/TBK1 pathway by disrupting the formation of TBK1-TRAF3 complexes and downstream signaling responses required for IFN-beta transcription. Its function is as follows. Forms homotetramers with glycoprotein N at the surface of the virion. Attaches the virion to host cell receptors including integrin ITGAV/ITGB3. This attachment induces virion internalization predominantly through clathrin-dependent endocytosis. Class II fusion protein that promotes fusion of viral membrane with host endosomal membrane after endocytosis of the virion. The protein is Envelopment polyprotein (GP) of Abrothrix longipilis (Long-haired grass mouse).